We begin with the raw amino-acid sequence, 206 residues long: Max dimerization protein 3 (206 aa).

Positions 8–25 (IQVLLQAAEFLERREREA) are interaction with SIN3A and SIN3B. 2 disordered regions span residues 25-67 (AEHG…ELEK) and 146-171 (RERLRADSLDSSGLSSERSDSDQEEL). The bHLH domain maps to 57-109 (SGRSVHNELEKRRRAQLKRCLERLKQQMPLGADCARYTTLSLLRRARMHIQKL).

In terms of assembly, efficient DNA binding requires dimerization with another bHLH protein. Binds DNA as a heterodimer with MAX. Interacts with SIN3A AND SIN3B. Interacts with RNF17.

It localises to the nucleus. In terms of biological role, transcriptional repressor. Binds with MAX to form a sequence-specific DNA-binding protein complex which recognizes the core sequence 5'-CAC[GA]TG-3'. Antagonizes MYC transcriptional activity by competing for MAX and suppresses MYC dependent cell transformation. This is Max dimerization protein 3 (MXD3) from Homo sapiens (Human).